Reading from the N-terminus, the 503-residue chain is MKTVILLVFLWGLSCALPVARYHNTESESSEERTGDLAGSPPPPTNSESSEESQASPEGQANSDHTDSSESGEELGYDRGQYRPAGGLSKSTGTGADKEDDEDDSGDDTFGDEDNDLGPEEGQWGGPSKLDSDEDSTDTTQSSEDSTSQENSAQDTPSDSKDHDSEDEADSRPEAGDSTQDSESEEQRVGGGSEGESSHGDGSEFDDEGMQSDDPESTRSDRGHARMSSAGIRSEESKGDHEPTSTQDSDDSQSVEFSSRKSFRRSHVSEEDYRGELTDSNSRETQSDSTEDTASKEESRSESQEDTAESQSQEDSPEGQDPSSESSEEAGEPSQESSSESQEGVTSESRGDNPDNTSQAGDQEDSESSEEDSLNTFSSSESQSTEEQADSESNESLSLSEESQESAQDGDSSSQEGLQSQSASTESRSQESQSEQDSRSEEDSDSQDSSRSKEESNSTGSASSSEEDIRPKNMEADSRKLIVDAYHNKPIGDQDDNDCQDGY.

An N-terminal signal peptide occupies residues 1–16 (MKTVILLVFLWGLSCA). Residues 23 to 35 (HNTESESSEERTG) are compositionally biased toward basic and acidic residues. Residues 23 to 503 (HNTESESSEE…QDDNDCQDGY (481 aa)) form a disordered region. The span at 54–63 (QASPEGQANS) shows a compositional bias: polar residues. The segment covering 98-119 (KEDDEDDSGDDTFGDEDNDLGP) has biased composition (acidic residues). Low complexity predominate over residues 138-150 (DTTQSSEDSTSQE). Positions 158-175 (SDSKDHDSEDEADSRPEA) are enriched in basic and acidic residues. Positions 203 to 215 (SEFDDEGMQSDDP) are enriched in acidic residues. 3 stretches are compositionally biased toward basic and acidic residues: residues 233–243 (RSEESKGDHEP), 267–286 (HVSE…RETQ), and 293–303 (TASKEESRSES). A compositionally biased stretch (low complexity) spans 332–348 (EPSQESSSESQEGVTSE). A Cell attachment site motif is present at residues 350 to 352 (RGD). N-linked (GlcNAc...) asparagine glycosylation is present at asparagine 356. A compositionally biased stretch (acidic residues) spans 362–373 (DQEDSESSEEDS). The N-linked (GlcNAc...) asparagine glycan is linked to asparagine 394. Residues 407-418 (AQDGDSSSQEGL) show a composition bias toward polar residues. A compositionally biased stretch (low complexity) spans 419–435 (QSQSASTESRSQESQSE). N-linked (GlcNAc...) asparagine glycosylation occurs at asparagine 457. Over residues 467-492 (EDIRPKNMEADSRKLIVDAYHNKPIG) the composition is skewed to basic and acidic residues. A compositionally biased stretch (acidic residues) spans 493 to 503 (DQDDNDCQDGY).

In terms of assembly, interacts with importin alpha. Post-translationally, phosphorylated in the cytosol and extracellular matrix and unphosphorylated in the nucleus. Phosphorylation is necessary for nucleocytoplasmic transport and may be catalyzed by a nuclear isoform of CK2 and can be augmented by calcium. Phosphorylated (in vitro) by FAM20C in the extracellular medium at sites within the S-x-E/pS motif. As to expression, expressed in tooth particularly in odontoblast, ameloblast and cementoblast. Also expressed in bone particularly in osteoblast.

It localises to the nucleus. Its subcellular location is the cytoplasm. It is found in the secreted. The protein localises to the extracellular space. The protein resides in the extracellular matrix. In terms of biological role, may have a dual function during osteoblast differentiation. In the nucleus of undifferentiated osteoblasts, unphosphorylated form acts as a transcriptional component for activation of osteoblast-specific genes like osteocalcin. During the osteoblast to osteocyte transition phase it is phosphorylated and exported into the extracellular matrix, where it regulates nucleation of hydroxyapatite. The polypeptide is Dentin matrix acidic phosphoprotein 1 (Mus musculus (Mouse)).